A 234-amino-acid polypeptide reads, in one-letter code: Riboflavin kinase (234 aa).

An H-T-H motif-like region spans residues 1 to 98; sequence MAESTTAVGH…QEIFGDNSSV (98 aa). Residues 99-234 form a riboflavin kinase region; that stretch reads VELTGTVTSG…RITVQLKPKE (136 aa). CDP is bound at residue 108–113; it reads GMGEGR. Mg(2+) is bound by residues Thr137 and Asn139. Positions 199 and 207 each coordinate FMN. 212 to 215 provides a ligand contact to CDP; sequence ERLR.

The protein belongs to the archaeal riboflavin kinase family. The cofactor is Mg(2+).

It carries out the reaction riboflavin + CTP = CDP + FMN + H(+). It participates in cofactor biosynthesis; FMN biosynthesis; FMN from riboflavin (CTP route): step 1/1. In terms of biological role, catalyzes the CTP-dependent phosphorylation of riboflavin (vitamin B2) to form flavin mononucleotide (FMN). The polypeptide is Riboflavin kinase (ribK) (Haloquadratum walsbyi (strain DSM 16790 / HBSQ001)).